A 152-amino-acid chain; its full sequence is Transcriptional regulator MraZ (152 aa).

2 consecutive SpoVT-AbrB domains span residues 5–52 (ATLV…PLPE) and 81–124 (ASEC…DETT).

It belongs to the MraZ family. As to quaternary structure, forms oligomers.

It is found in the cytoplasm. The protein localises to the nucleoid. Negatively regulates its own expression and that of the subsequent genes in the proximal part of the division and cell wall (dcw) gene cluster. Acts by binding directly to DNA. May also regulate the expression of genes outside the dcw cluster. The sequence is that of Transcriptional regulator MraZ from Salmonella typhi.